We begin with the raw amino-acid sequence, 314 residues long: Coiled-coil domain-containing protein 42 like-2 (314 aa).

Coiled-coil stretches lie at residues 34–139 (RLLE…RQEK) and 175–233 (NKLL…WESR).

This sequence belongs to the CFAP73 family.

This is Coiled-coil domain-containing protein 42 like-2 from Xenopus laevis (African clawed frog).